The following is a 742-amino-acid chain: MEEEVQQHSHCVNCVSRRCMTRPEPGVSCDLIGCPLVCGAVFHSCKADEHRLLCPFERVPCLNSNFGCPFTLARNKVAEHLEMCPASVVCCTMEWNRWPVSYSDRKSYESLSRDADEVSQLDMALALQDQRMLLESLKVATMMSKATGKISKPREQISVNSSVQEVPRANGLVSADEESYGALYEATVETTRSLAAALDILNSATRDIGMLNTSLQGTTNEMDEESNRESSQDRNAKDQDHLDEGEIGAVGGIDYTGTSQNAQAEQNGSSDLLCNLNTSSYDTSALCNGFPLEKMCTQVKDQDQNFHGDSTESNITNGDCVEADGTSEPPSSLLVAEQLKEGSALPDSTYQHILMPDEDDDEDLCWKKDLGDSKDVNGSPLSHATSFKFLSNSWYIPKEDKAVDTSDLEVAEDPMGLQGIDLITAALLFCLGDSPGGRGISDSRMVDVYHVDFGTQTFSLPSAILATNTMVGEIASASACDHANPQLSNPSPFQTLGLDLVLECVARYQPKQRSMFTFVCGQLFRRKEFSSHFKNVHGDIHAGLNGWMEQRCPLAYYGCTYSQRRFCPSTQGAKIIHDRHLRSFGVQPCVSTALEEPSRNCVLGLRSDHLSSLPFEVLQHIAGFLDGFSLCQLACVSRLMRDICGSLLQSRGMVILQWGKKKYPEGNSSWQIKEKVWRFSTAFCSVNDWKFADILSMADHLKKCSYNVIEKREEAIPLPCMCVTRELTKEGRSLRSVLKPVL.

The TRAF-type zinc finger occupies 49–108; sequence EHRLLCPFERVPCLNSNFGCPFTLARNKVAEHLEMCPASVVCCTMEWNRWPVSYSDRKSY. The segment at 214–242 is disordered; that stretch reads SLQGTTNEMDEESNRESSQDRNAKDQDHL. Basic and acidic residues predominate over residues 225-242; it reads ESNRESSQDRNAKDQDHL. Ser379 is modified (phosphoserine). The F-box domain maps to 607–653; that stretch reads SDHLSSLPFEVLQHIAGFLDGFSLCQLACVSRLMRDICGSLLQSRGM.

Part of a SCF (SKP1-cullin-F-box) protein ligase complex. Interacts with SKP1, CUL1 and RBX1/ROC1. Auto-ubiquitinated. Post-translationally, may be neddylated. Neddylation may be required for E3 ligase activity.

It functions in the pathway protein modification; protein ubiquitination. In terms of biological role, substrate-recognition component of the SCF (SKP1-CUL1-F-box protein)-type E3 ubiquitin ligase complex. Required for muscle atrophy following denervation. The polypeptide is F-box only protein 30 (Fbxo30) (Rattus norvegicus (Rat)).